The chain runs to 396 residues: Elongation factor Tu (396 aa).

A tr-type G domain is found at 10–205 (KEHVNIGTIG…AVDNYIETPV (196 aa)). The interval 19 to 26 (GHVDHGKT) is G1. 19 to 26 (GHVDHGKT) is a GTP binding site. T26 serves as a coordination point for Mg(2+). The segment at 60–64 (GITIN) is G2. The interval 81–84 (DCPG) is G3. GTP is bound by residues 81–85 (DCPGH) and 136–139 (NKVD). A G4 region spans residues 136–139 (NKVD). A G5 region spans residues 175–177 (SAL).

This sequence belongs to the TRAFAC class translation factor GTPase superfamily. Classic translation factor GTPase family. EF-Tu/EF-1A subfamily. Monomer.

The protein resides in the cytoplasm. The catalysed reaction is GTP + H2O = GDP + phosphate + H(+). Its function is as follows. GTP hydrolase that promotes the GTP-dependent binding of aminoacyl-tRNA to the A-site of ribosomes during protein biosynthesis. The protein is Elongation factor Tu of Mycoplasmopsis pulmonis (strain UAB CTIP) (Mycoplasma pulmonis).